We begin with the raw amino-acid sequence, 625 residues long: Dopamine beta-hydroxylase (625 aa).

Residues 1-9 are Cytoplasmic-facing; it reads MQVPSPSAR. Residues 10–30 traverse the membrane as a helical; Signal-anchor for type II membrane protein segment; the sequence is EAASMYGTAVAVFLVLLVAVL. Topologically, residues 31 to 625 are intragranular; that stretch reads QGLAPPESPL…TVVNIGGGKV (595 aa). One can recognise a DOMON domain in the interval 50–166; sequence GDLELSWDVS…GTVHLVYGVL (117 aa). 6 disulfide bridges follow: cysteine 147–cysteine 604, cysteine 224–cysteine 275, cysteine 261–cysteine 287, cysteine 382–cysteine 495, cysteine 386–cysteine 573, and cysteine 458–cysteine 480. Asparagine 177 carries an N-linked (GlcNAc...) asparagine glycan. Tyrosine 222 is a catalytic residue. Histidine 254 and histidine 255 together coordinate Cu(2+). Asparagine 315 carries an N-linked (GlcNAc...) asparagine glycan. Residues histidine 325, histidine 404, histidine 406, and methionine 479 each contribute to the Cu(2+) site. Histidine 404 is a catalytic residue. Asparagine 574 carries N-linked (GlcNAc...) asparagine glycosylation.

Belongs to the copper type II ascorbate-dependent monooxygenase family. Homotetramer; composed of two disulfide-linked dimers. It depends on Cu(2+) as a cofactor. Proteolytic cleavage after the membrane-anchor leads to the release of the soluble form. Post-translationally, N-glycosylated.

Its subcellular location is the cytoplasmic vesicle. It is found in the secretory vesicle lumen. The protein resides in the secretory vesicle. The protein localises to the chromaffin granule lumen. It localises to the secreted. Its subcellular location is the secretory vesicle membrane. It is found in the chromaffin granule membrane. The enzyme catalyses dopamine + 2 L-ascorbate + O2 = (R)-noradrenaline + 2 monodehydro-L-ascorbate radical + H2O. The protein operates within catecholamine biosynthesis; (R)-noradrenaline biosynthesis; (R)-noradrenaline from dopamine: step 1/1. Catalyzes the hydroxylation of dopamine to noradrenaline (also known as norepinephrine), and is thus vital for regulation of these neurotransmitters. This Canis lupus familiaris (Dog) protein is Dopamine beta-hydroxylase (DBH).